The sequence spans 69 residues: Double-strand break reduction protein (69 aa).

Functionally, helps to maintain the integrity of the chromosome by lowering the steady-state level of double strand breaks. This region of DNA acts as an antitoxin to toxin RalR, a DNase, but it seems to be sRNA RalA that has the antitoxin activity and not this putative protein. Therefore the identity of this as a protein-coding gene has been cast into doubt. This is Double-strand break reduction protein from Escherichia coli (strain K12).